The primary structure comprises 1034 residues: MSARKRKFNSLKPLDTLNSSRASSPRSSASLPPKRYNTFRKDPKIVDHLNNASTKDFLPVLSMNSESKRQIELSDNDVDNNDEGEGVNSGCSDQDFEPLQSSPLKRHSSLKSTSNGLLFQMSNNLGNGSPEPAVASTSPNGSIISTKLNLNGQFSCVDSKTLRIYRHKAPCIMTFVSDHNHPKFSLYFQQSVIYNSQVNLLDDVELIILDKKNSFMAIILKDLKKVKMILDVNNSSININTNILIWSTASSASNKKIKSIKRFLLMSYSSSIKVEILDHKEQILERLKHLIHPISSSSPSLNMERAINSTKNAFDSLRLKKTKLSTNDDESPQIHTHFLSNKPHGLQSLTKRTRIASLGKKEHSISVPKSNISPSDFYNTNGTETLQSHAVSQLRRSNRFKDVSDPANSNSNSEFDDATTEFETPELFKPSLCYKFNDGSSYTITNQDFKCLFNKDWVNDSILDFFTKFYIESSIEKSIIKREQVHLMSSFFYTKLISNPADYYSNVKKWVNNTDLFSKKYVVIPINISYHWFSCIITNLDAILDFHQNKDKNDAINSDEISINNPLVNILTFDSLRQTHSREIDPIKEFLISYALDKYSIQLDKTQIKMKTCPVPQQPNMSDCGVHVILNIRKFFENPVETIDVWKNSKIKSKHFTAKMINKYFDKNERNSARKNLRHTLKLLQLNYISYLKKENLYEEVMQMEEKKSTNINNNENYDDDDEEIQIIENIDQSSKDNNAQLTSEPPCSRSSSISTTEREPTELHNSVVRQPTGEIITDNEDPVRAASPETASVSPPIRHNILKSSSPFISESANETEQEEFTSPYFGRPSLKTRAKQFEGVSSPIKNDQALSSTHDIMMPSPKPKRIYPSKKIPQLSSHVQSLSTDSMERQSSPNNTNIVISDTEQDSRLGVNSESKNTSGIVNRDDSDVNLIGSSLPNVAEKNHDNTQESNGNNDSLGKILQNVDKELNEKLVDIDDVAFSSPTRGIPRTSATSKGSNAQLLSNYGDENNQSQDSVWDEGRDNPILLEDEDP.

Disordered stretches follow at residues 1–42 (MSAR…FRKD), 71–110 (IELS…HSSL), 388–419 (SHAV…DDAT), 731–800 (IDQS…PIRH), 841–960 (GVSS…DSLG), and 983–1034 (SSPT…DEDP). The span at 19–33 (SSRASSPRSSASLPP) shows a compositional bias: low complexity. Over residues 74-85 (SDNDVDNNDEGE) the composition is skewed to acidic residues. Over residues 743–756 (TSEPPCSRSSSIST) the composition is skewed to low complexity. A Phosphoserine modification is found at Ser-788. Composition is skewed to polar residues over residues 845–856 (PIKNDQALSSTH), 876–904 (QLSS…VISD), and 912–923 (GVNSESKNTSGI). Ser-903 carries the post-translational modification Phosphoserine. 2 positions are modified to phosphoserine: Ser-983 and Ser-984. A compositionally biased stretch (polar residues) spans 992–1017 (TSATSKGSNAQLLSNYGDENNQSQDS).

It belongs to the peptidase C48 family.

Its function is as follows. Insertion mutation in SMT4 confers temperature and benomyl sensitivity; high copy suppressor of a temperature sensitive mutation in MIF2. The polypeptide is Ubiquitin-like-specific protease 2 (ULP2) (Saccharomyces cerevisiae (strain ATCC 204508 / S288c) (Baker's yeast)).